The primary structure comprises 156 residues: Small ribosomal subunit protein uS7 (156 aa).

This sequence belongs to the universal ribosomal protein uS7 family. Part of the 30S ribosomal subunit. Contacts proteins S9 and S11.

One of the primary rRNA binding proteins, it binds directly to 16S rRNA where it nucleates assembly of the head domain of the 30S subunit. Is located at the subunit interface close to the decoding center, probably blocks exit of the E-site tRNA. This Crocosphaera subtropica (strain ATCC 51142 / BH68) (Cyanothece sp. (strain ATCC 51142)) protein is Small ribosomal subunit protein uS7.